Consider the following 366-residue polypeptide: NADH-quinone oxidoreductase subunit D (366 aa).

It belongs to the complex I 49 kDa subunit family. NDH-1 is composed of 14 different subunits. Subunits NuoB, C, D, E, F, and G constitute the peripheral sector of the complex.

The protein resides in the cell membrane. The enzyme catalyses a quinone + NADH + 5 H(+)(in) = a quinol + NAD(+) + 4 H(+)(out). In terms of biological role, NDH-1 shuttles electrons from NADH, via FMN and iron-sulfur (Fe-S) centers, to quinones in the respiratory chain. The immediate electron acceptor for the enzyme in this species is believed to be a menaquinone. Couples the redox reaction to proton translocation (for every two electrons transferred, four hydrogen ions are translocated across the cytoplasmic membrane), and thus conserves the redox energy in a proton gradient. This Bacillus anthracis protein is NADH-quinone oxidoreductase subunit D.